A 483-amino-acid chain; its full sequence is Proline--tRNA ligase (483 aa).

This sequence belongs to the class-II aminoacyl-tRNA synthetase family. ProS type 3 subfamily. Homodimer.

Its subcellular location is the cytoplasm. The catalysed reaction is tRNA(Pro) + L-proline + ATP = L-prolyl-tRNA(Pro) + AMP + diphosphate. Catalyzes the attachment of proline to tRNA(Pro) in a two-step reaction: proline is first activated by ATP to form Pro-AMP and then transferred to the acceptor end of tRNA(Pro). The chain is Proline--tRNA ligase from Sulfolobus acidocaldarius (strain ATCC 33909 / DSM 639 / JCM 8929 / NBRC 15157 / NCIMB 11770).